Here is a 499-residue protein sequence, read N- to C-terminus: Glycerol kinase (499 aa).

ADP is bound at residue Thr13. The ATP site is built by Thr13, Thr14, and Ser15. Thr13 is a sn-glycerol 3-phosphate binding site. Position 17 (Arg17) interacts with ADP. Sn-glycerol 3-phosphate-binding residues include Arg83, Glu84, Tyr136, and Asp246. Positions 83, 84, 136, 246, and 247 each coordinate glycerol. Residues Thr268 and Gly311 each contribute to the ADP site. Residues Thr268, Gly311, Gln315, and Gly412 each coordinate ATP. ADP-binding residues include Gly412 and Asn416.

Belongs to the FGGY kinase family.

It catalyses the reaction glycerol + ATP = sn-glycerol 3-phosphate + ADP + H(+). It functions in the pathway polyol metabolism; glycerol degradation via glycerol kinase pathway; sn-glycerol 3-phosphate from glycerol: step 1/1. Inhibited by fructose 1,6-bisphosphate (FBP). Functionally, key enzyme in the regulation of glycerol uptake and metabolism. Catalyzes the phosphorylation of glycerol to yield sn-glycerol 3-phosphate. In Francisella philomiragia subsp. philomiragia (strain ATCC 25017 / CCUG 19701 / FSC 153 / O#319-036), this protein is Glycerol kinase.